The following is a 684-amino-acid chain: DNA ligase (684 aa).

NAD(+) is bound by residues 34–38, 83–84, and glutamate 117; these read DFQYD and SL. The N6-AMP-lysine intermediate role is filled by lysine 119. NAD(+) is bound by residues arginine 140, glutamate 186, lysine 300, and lysine 324. The Zn(2+) site is built by cysteine 418, cysteine 421, cysteine 436, and cysteine 442. The 84-residue stretch at 601–684 folds into the BRCT domain; that stretch reads PVNLNFDGMK…EMLGEVGSNE (84 aa).

Belongs to the NAD-dependent DNA ligase family. LigA subfamily. Mg(2+) is required as a cofactor. The cofactor is Mn(2+).

The enzyme catalyses NAD(+) + (deoxyribonucleotide)n-3'-hydroxyl + 5'-phospho-(deoxyribonucleotide)m = (deoxyribonucleotide)n+m + AMP + beta-nicotinamide D-nucleotide.. Its function is as follows. DNA ligase that catalyzes the formation of phosphodiester linkages between 5'-phosphoryl and 3'-hydroxyl groups in double-stranded DNA using NAD as a coenzyme and as the energy source for the reaction. It is essential for DNA replication and repair of damaged DNA. The sequence is that of DNA ligase from Chlorobium phaeobacteroides (strain BS1).